The chain runs to 426 residues: 3-phosphoshikimate 1-carboxyvinyltransferase (426 aa).

3-phosphoshikimate is bound by residues Lys-23, Ser-24, and Arg-28. Lys-23 is a phosphoenolpyruvate binding site. Positions 96 and 124 each coordinate phosphoenolpyruvate. 3-phosphoshikimate is bound by residues Thr-170, Ser-171, Gln-172, Ser-198, Asp-314, and Lys-341. Phosphoenolpyruvate is bound at residue Gln-172. The active-site Proton acceptor is the Asp-314. Arg-345, Arg-386, and Lys-411 together coordinate phosphoenolpyruvate.

It belongs to the EPSP synthase family. In terms of assembly, monomer.

Its subcellular location is the cytoplasm. It carries out the reaction 3-phosphoshikimate + phosphoenolpyruvate = 5-O-(1-carboxyvinyl)-3-phosphoshikimate + phosphate. Its pathway is metabolic intermediate biosynthesis; chorismate biosynthesis; chorismate from D-erythrose 4-phosphate and phosphoenolpyruvate: step 6/7. Catalyzes the transfer of the enolpyruvyl moiety of phosphoenolpyruvate (PEP) to the 5-hydroxyl of shikimate-3-phosphate (S3P) to produce enolpyruvyl shikimate-3-phosphate and inorganic phosphate. The protein is 3-phosphoshikimate 1-carboxyvinyltransferase of Nostoc punctiforme (strain ATCC 29133 / PCC 73102).